An 817-amino-acid chain; its full sequence is Coiled-coil domain-containing protein 175 (817 aa).

Coiled coils occupy residues 130–166 (ILEI…ALGI) and 217–594 (LQDA…KQEE). The interval 761 to 817 (EEESPSSLSKEDLQKAGMKQKEEKTLRFSPSLHTRRDTLSRNCKMIKKRSRSPKNKP) is disordered. Basic and acidic residues predominate over residues 769–786 (SKEDLQKAGMKQKEEKTL). A compositionally biased stretch (basic residues) spans 804–817 (KMIKKRSRSPKNKP).

The polypeptide is Coiled-coil domain-containing protein 175 (Ccdc175) (Rattus norvegicus (Rat)).